A 797-amino-acid chain; its full sequence is Inactive deaminase YBR284W (797 aa).

Residues 627-647 traverse the membrane as a helical segment; it reads LVYLFYLSQIPMVVAPLNSIV.

Belongs to the metallo-dependent hydrolases superfamily. Adenosine and AMP deaminases family.

Its subcellular location is the membrane. The protein is Inactive deaminase YBR284W of Saccharomyces cerevisiae (strain ATCC 204508 / S288c) (Baker's yeast).